Here is a 64-residue protein sequence, read N- to C-terminus: Conotoxin Pu3.5 (64 aa).

The N-terminal stretch at 1–16 (LGVLLTICLLLFPLTA) is a signal peptide. A propeptide spanning residues 17–49 (VPLDGDQPADQPAGRMQDDISSEQHPFFDPVKR) is cleaved from the precursor. Intrachain disulfides connect Cys-50-Cys-63, Cys-51-Cys-58, and Cys-54-Cys-62.

This sequence belongs to the conotoxin M superfamily. In terms of tissue distribution, expressed by the venom duct.

The protein resides in the secreted. The sequence is that of Conotoxin Pu3.5 from Conus pulicarius (Flea-bitten cone).